The sequence spans 511 residues: Maturase K (511 aa).

Belongs to the intron maturase 2 family. MatK subfamily.

Its subcellular location is the plastid. It localises to the chloroplast. Its function is as follows. Usually encoded in the trnK tRNA gene intron. Probably assists in splicing its own and other chloroplast group II introns. The sequence is that of Maturase K from Hordeum jubatum (Foxtail barley).